The primary structure comprises 184 residues: ATP synthase subunit b, chloroplastic (184 aa).

The helical transmembrane segment at 31-49 (IINPSVVLSVLIYFGKGVL) threads the bilayer.

Belongs to the ATPase B chain family. F-type ATPases have 2 components, F(1) - the catalytic core - and F(0) - the membrane proton channel. F(1) has five subunits: alpha(3), beta(3), gamma(1), delta(1), epsilon(1). F(0) has four main subunits: a(1), b(1), b'(1) and c(10-14). The alpha and beta chains form an alternating ring which encloses part of the gamma chain. F(1) is attached to F(0) by a central stalk formed by the gamma and epsilon chains, while a peripheral stalk is formed by the delta, b and b' chains.

The protein localises to the plastid. It is found in the chloroplast thylakoid membrane. F(1)F(0) ATP synthase produces ATP from ADP in the presence of a proton or sodium gradient. F-type ATPases consist of two structural domains, F(1) containing the extramembraneous catalytic core and F(0) containing the membrane proton channel, linked together by a central stalk and a peripheral stalk. During catalysis, ATP synthesis in the catalytic domain of F(1) is coupled via a rotary mechanism of the central stalk subunits to proton translocation. Functionally, component of the F(0) channel, it forms part of the peripheral stalk, linking F(1) to F(0). This is ATP synthase subunit b, chloroplastic from Pinus koraiensis (Korean pine).